The sequence spans 199 residues: GTP cyclohydrolase-2 (199 aa).

52–56 (RMHSE) lines the GTP pocket. Zn(2+) contacts are provided by C57, C68, and C70. Residues Q73, 94–96 (EGR), and T116 contribute to the GTP site. D128 (proton acceptor) is an active-site residue. R130 functions as the Nucleophile in the catalytic mechanism. Residues T151 and K156 each contribute to the GTP site.

This sequence belongs to the GTP cyclohydrolase II family. Zn(2+) is required as a cofactor.

The catalysed reaction is GTP + 4 H2O = 2,5-diamino-6-hydroxy-4-(5-phosphoribosylamino)-pyrimidine + formate + 2 phosphate + 3 H(+). It participates in cofactor biosynthesis; riboflavin biosynthesis; 5-amino-6-(D-ribitylamino)uracil from GTP: step 1/4. In terms of biological role, catalyzes the conversion of GTP to 2,5-diamino-6-ribosylamino-4(3H)-pyrimidinone 5'-phosphate (DARP), formate and pyrophosphate. The chain is GTP cyclohydrolase-2 from Aliivibrio fischeri (strain ATCC 700601 / ES114) (Vibrio fischeri).